A 381-amino-acid polypeptide reads, in one-letter code: Pectin lyase 1 (381 aa).

Residues 1 to 20 (MKYASFIAAAAAALASAVSA) form the signal peptide. Disulfide bonds link Cys83-Cys102 and Cys92-Cys227. Asn130 carries N-linked (GlcNAc...) asparagine glycosylation. The active site involves Arg257. An intrachain disulfide couples Cys324 to Cys332.

It belongs to the polysaccharide lyase 1 family.

It is found in the secreted. It carries out the reaction Eliminative cleavage of (1-&gt;4)-alpha-D-galacturonan methyl ester to give oligosaccharides with 4-deoxy-6-O-methyl-alpha-D-galact-4-enuronosyl groups at their non-reducing ends.. Functionally, pectinolytic enzymes consist of four classes of enzymes: pectin lyase, polygalacturonase, pectin methylesterase and rhamnogalacturonase. Among pectinolytic enzymes, pectin lyase is the most important in depolymerization of pectin, since it cleaves internal glycosidic bonds of highly methylated pectins. The polypeptide is Pectin lyase 1 (pel1) (Aspergillus oryzae (strain ATCC 42149 / RIB 40) (Yellow koji mold)).